The chain runs to 494 residues: Solute carrier family 2, facilitated glucose transporter member 3 (494 aa).

Residues 1–10 (MGTTKVTAPL) lie on the Cytoplasmic side of the membrane. Residues 11-32 (IFAISVATIGSFQFGYNTGVIN) traverse the membrane as a helical segment. Over 33–64 (APEAIIKDFLNYTLEERSEPPPSSVLLTSLWS) the chain is Extracellular. An N-linked (GlcNAc...) asparagine glycan is attached at Asn-43. A helical membrane pass occupies residues 65-85 (LSVAIFSVGGMIGSFSVGLFV). Over 86–90 (NRFGR) the chain is Cytoplasmic. A helical transmembrane segment spans residues 91-111 (GNSMLIVNLLAIAGGCLMGFC). Residues 112–118 (KIAESVE) are Extracellular-facing. A helical membrane pass occupies residues 119-142 (MLILGRLIIGLFCGLCTGFVPMYI). Over 143–153 (GEISPTALRGA) the chain is Cytoplasmic. The helical transmembrane segment at 154–174 (FGTLNQLGIVIGILVAQIFGL) threads the bilayer. Gln-159 contacts D-glucose. Residues 175 to 183 (KVILGTEDL) are Extracellular-facing. The helical transmembrane segment at 184 to 204 (WPLLLGFTILPAIIQCAALPF) threads the bilayer. Residues 205–269 (CPESPRFLLI…LFRAPNYRQP (65 aa)) are Cytoplasmic-facing. Phosphothreonine is present on Thr-232. The chain crosses the membrane as a helical span at residues 270–290 (IIISIMLQLSQQLSGINAVFY). The tract at residues 277–279 (QLS) is important for selectivity against fructose. D-glucose contacts are provided by residues 280 to 281 (QQ) and Asn-286. The Extracellular segment spans residues 291-304 (YSTGIFKDAGVQEP). A helical membrane pass occupies residues 305–325 (VYATIGAGVVNTIFTVVSVFL). Asn-315 serves as a coordination point for D-glucose. Residues 326 to 331 (VERAGR) are Cytoplasmic-facing. Residues 332-352 (RTLHLIGLGGMAFCSILMTIS) form a helical membrane-spanning segment. Residues 353-363 (LLLKDNYSWMS) lie on the Extracellular side of the membrane. Asn-358 carries N-linked (GlcNAc...) asparagine glycosylation. Residues 364-389 (FICIGAILVFVAFFEIGPGPIPWFIV) traverse the membrane as a helical segment. Positions 378 and 386 each coordinate D-glucose. Over 390–399 (AELFGQGPRP) the chain is Cytoplasmic. Residues 400–420 (AAMAVAGCSNWTSNFLVGLLF) traverse the membrane as a helical segment. Residues 421-429 (PSAAFYLGA) are Extracellular-facing. The helical transmembrane segment at 430–450 (YVFIVFTVFLVIFWVFTFFKV) threads the bilayer. Residues 451-494 (PETRGRTFEEITRAFEGQTQTGTRGEKGPIMEMNSIQPTKDTNA) are Cytoplasmic-facing. Residues 469 to 494 (TQTGTRGEKGPIMEMNSIQPTKDTNA) form a disordered region. A compositionally biased stretch (polar residues) spans 484–494 (NSIQPTKDTNA). Ser-485 bears the Phosphoserine mark. Residue Thr-492 is modified to Phosphothreonine.

The protein belongs to the major facilitator superfamily. Sugar transporter (TC 2.A.1.1) family. Glucose transporter subfamily. As to quaternary structure, interacts with SMIM43; the interaction may promote SLC2A1-mediated glucose transport to meet the energy needs of mesendoderm differentiation.

It is found in the cell membrane. It localises to the perikaryon. The protein resides in the cell projection. The enzyme catalyses D-glucose(out) = D-glucose(in). It carries out the reaction D-galactose(in) = D-galactose(out). Deoxyglucose transport is inhibited by D-glucose, D-galactose and maltose. Galactose transport is inhibited by D-glucose and maltose. In terms of biological role, facilitative glucose transporter. Can also mediate the uptake of various other monosaccharides across the cell membrane. Mediates the uptake of glucose, 2-deoxyglucose, galactose, mannose, xylose and fucose, and probably also dehydroascorbate. Does not mediate fructose transport. Required for mesendoderm differentiation. The protein is Solute carrier family 2, facilitated glucose transporter member 3 of Bos taurus (Bovine).